The chain runs to 85 residues: Dual endothelin-1/VEGF signal peptide receptor (85 aa).

Topologically, residues Met1 to Ser18 are extracellular. The helical transmembrane segment at Ile19 to Ser37 threads the bilayer. Residues Lys38–Val85 lie on the Cytoplasmic side of the membrane.

In terms of processing, N-glycosylated. Expressed in kidney. Expressed in endothelial cells.

It is found in the cell membrane. In terms of biological role, dual receptor for both endothelin-1 and the signal sequence of vascular endothelial growth factor A. Does not act as a receptor for angiotensin-2. Does not bind the VEGFA mature protein. May play a role in angiogenesis with a significant role in cardiovascular and neural development. This is Dual endothelin-1/VEGF signal peptide receptor from Homo sapiens (Human).